The primary structure comprises 528 residues: Protein DA1-related 2 (528 aa).

The interval 60–108 (SNGGGSGAHTNHHPPQFQEDENMVFPLPPSSLDDRSRGARDKEELDRSI) is disordered. A compositionally biased stretch (basic and acidic residues) spans 91 to 106 (LDDRSRGARDKEELDR). Positions 99–118 (RDKEELDRSISLSLADNTKR) constitute a UIM 1 domain. One can recognise a UIM 2; degenerate domain in the interval 127-148 (DNNRDFPRPFHGGLNPSSFIPP). Positions 160-220 (RICGGCNSDI…KLCFKELTHP (61 aa)) constitute an LIM zinc-binding domain. Positions 447-474 (DPSTRNLPSTSSVATSSSSSFSNKKGGK) are disordered. Positions 455 to 470 (STSSVATSSSSSFSNK) are enriched in low complexity.

In terms of assembly, interacts with ubiquitin, TCP14 and TCP15. Post-translationally, polyubiquitinated by DA2. Expressed in the vasculature of leaves, inflorescence stems, flowers, hypocotyls, and primary and lateral roots. In roots, expressed in phloem companion cells.

In terms of biological role, acts redundantly with DA1 and DAR1 to regulate endoreduplication during leaf development. Together with DA1 and DAR1, modulates the protein stability of the transcription factors TCP14 and TCP15, which repress endoreduplication by directly regulating the expression of cell-cycle genes. Involved in root phloem development. Is an essential component of early phloem development, long-distance delivery of phloem content, and proper maintenance of root system architecture. Involved in the control of root meristem size. Functions genetically downstream of cytokinin and IAA3 to maintain normal auxin distribution by influencing polar auxin transport. Acts through the PLETHORA pathway, upstream of PLT1 and PLT2 to influence root stem cell niche activity and thus control root meristem size. The chain is Protein DA1-related 2 from Arabidopsis thaliana (Mouse-ear cress).